Consider the following 156-residue polypeptide: Myosin regulatory light chain B, smooth adductor muscle (156 aa).

At A1 the chain carries Blocked amino end (Ala). 2 EF-hand domains span residues 15 to 50 (KQIQ…LGRT) and 84 to 119 (DTEE…MGDN). 4 residues coordinate Ca(2+): D28, N30, D32, and D39.

In terms of biological role, in molluscan muscle, calcium regulation is associated with myosin rather than with actin. Muscle myosin contains two types of light chains: the catalytic light chain, essential for ATPase activity, and the regulatory light chain, a calcium-binding protein responsible for Ca(2+) dependent binding and Ca(2+) dependent Mg-ATPase activity. In Mizuhopecten yessoensis (Japanese scallop), this protein is Myosin regulatory light chain B, smooth adductor muscle.